The following is a 34-amino-acid chain: MSDIN-like toxin proprotein 3 (34 aa).

A propeptide spanning residues Met-1–Pro-10 is cleaved from the precursor. The segment at residues Leu-11–Pro-18 is a cross-link (cyclopeptide (Leu-Pro)). Residues Cys-19–Ser-34 constitute a propeptide that is removed on maturation.

Belongs to the MSDIN fungal toxin family. Post-translationally, processed by the macrocyclase-peptidase enzyme POPB to yield a toxic cyclic octapeptide. POPB first removes 10 residues from the N-terminus. Conformational trapping of the remaining peptide forces the enzyme to release this intermediate rather than proceed to macrocyclization. The enzyme rebinds the remaining peptide in a different conformation and catalyzes macrocyclization of the N-terminal 8 residues. Expressed in basidiocarps.

Functionally, probable toxin that belongs to the MSDIN-like toxin family responsible for a large number of food poisoning cases and deaths. The chain is MSDIN-like toxin proprotein 3 from Amanita exitialis (Guangzhou destroying angel).